Reading from the N-terminus, the 391-residue chain is Phosphoglycerate kinase (391 aa).

Substrate is bound by residues 21–23, arginine 36, 59–62, arginine 113, and arginine 146; these read DLN and HLGR. Residues lysine 197, glutamate 319, and 345–348 contribute to the ATP site; that span reads GGDT.

Belongs to the phosphoglycerate kinase family. As to quaternary structure, monomer.

The protein resides in the cytoplasm. It carries out the reaction (2R)-3-phosphoglycerate + ATP = (2R)-3-phospho-glyceroyl phosphate + ADP. It functions in the pathway carbohydrate degradation; glycolysis; pyruvate from D-glyceraldehyde 3-phosphate: step 2/5. The protein is Phosphoglycerate kinase of Shewanella baltica (strain OS223).